A 314-amino-acid polypeptide reads, in one-letter code: Porphobilinogen deaminase (314 aa).

At Cys242 the chain carries S-(dipyrrolylmethanemethyl)cysteine.

This sequence belongs to the HMBS family. In terms of assembly, monomer. It depends on dipyrromethane as a cofactor.

It carries out the reaction 4 porphobilinogen + H2O = hydroxymethylbilane + 4 NH4(+). It functions in the pathway porphyrin-containing compound metabolism; protoporphyrin-IX biosynthesis; coproporphyrinogen-III from 5-aminolevulinate: step 2/4. Functionally, tetrapolymerization of the monopyrrole PBG into the hydroxymethylbilane pre-uroporphyrinogen in several discrete steps. This Buchnera aphidicola subsp. Acyrthosiphon pisum (strain APS) (Acyrthosiphon pisum symbiotic bacterium) protein is Porphobilinogen deaminase (hemC).